The primary structure comprises 437 residues: UDP-N-acetylmuramoylalanine--D-glutamate ligase (437 aa).

112-118 (GSNGKST) contributes to the ATP binding site.

It belongs to the MurCDEF family.

The protein localises to the cytoplasm. The enzyme catalyses UDP-N-acetyl-alpha-D-muramoyl-L-alanine + D-glutamate + ATP = UDP-N-acetyl-alpha-D-muramoyl-L-alanyl-D-glutamate + ADP + phosphate + H(+). It participates in cell wall biogenesis; peptidoglycan biosynthesis. Functionally, cell wall formation. Catalyzes the addition of glutamate to the nucleotide precursor UDP-N-acetylmuramoyl-L-alanine (UMA). The protein is UDP-N-acetylmuramoylalanine--D-glutamate ligase of Haemophilus influenzae (strain PittEE).